The chain runs to 436 residues: C4-dicarboxylate transport protein 2 (436 aa).

A run of 9 helical transmembrane segments spans residues 14–34 (VLVA…TAVA), 45–65 (LIKM…IAGM), 77–97 (MALL…LVVV), 142–162 (VVGA…VLFG), 198–218 (PIGA…GSLV), 223–243 (LMLC…GGIA), 290–310 (VVGL…SIYL), 331–351 (ITLL…TGSG), and 353–373 (IVLA…LALI). The tract at residues 414-436 (ELAGEGNASSPASDIPVGGREAV) is disordered.

This sequence belongs to the dicarboxylate/amino acid:cation symporter (DAACS) (TC 2.A.23) family.

The protein localises to the cell inner membrane. Functionally, responsible for the transport of dicarboxylates such as succinate, fumarate, and malate from the periplasm across the membrane. In Pseudomonas aeruginosa (strain UCBPP-PA14), this protein is C4-dicarboxylate transport protein 2.